The sequence spans 175 residues: PE-PGRS family protein PE_PGRS8 (175 aa).

The 93-residue stretch at 1-93 folds into the PE domain; that stretch reads MSFVIAAPEA…AGSYAAAEAA (93 aa).

The protein belongs to the mycobacterial PE family. PGRS subfamily.

The protein localises to the secreted. It localises to the cell wall. The protein resides in the cell surface. In Mycobacterium tuberculosis (strain ATCC 25618 / H37Rv), this protein is PE-PGRS family protein PE_PGRS8.